The following is a 403-amino-acid chain: Bifunctional enzyme IspD/IspF (403 aa).

The interval 1 to 234 (MPTSKRTAAI…ARLAAMLGDI (234 aa)) is 2-C-methyl-D-erythritol 4-phosphate cytidylyltransferase. Residues 235-403 (RTGTGYDVHA…SDQEDKGWST (169 aa)) are 2-C-methyl-D-erythritol 2,4-cyclodiphosphate synthase. Aspartate 241 and histidine 243 together coordinate a divalent metal cation. Residues 241–243 (DVH) and 267–268 (HS) contribute to the 4-CDP-2-C-methyl-D-erythritol 2-phosphate site. Histidine 275 contributes to the a divalent metal cation binding site. Residues 289-291 (DIG), 365-368 (TTSE), phenylalanine 372, and arginine 375 contribute to the 4-CDP-2-C-methyl-D-erythritol 2-phosphate site.

In the N-terminal section; belongs to the IspD/TarI cytidylyltransferase family. IspD subfamily. The protein in the C-terminal section; belongs to the IspF family. Requires a divalent metal cation as cofactor.

It catalyses the reaction 2-C-methyl-D-erythritol 4-phosphate + CTP + H(+) = 4-CDP-2-C-methyl-D-erythritol + diphosphate. The enzyme catalyses 4-CDP-2-C-methyl-D-erythritol 2-phosphate = 2-C-methyl-D-erythritol 2,4-cyclic diphosphate + CMP. It functions in the pathway isoprenoid biosynthesis; isopentenyl diphosphate biosynthesis via DXP pathway; isopentenyl diphosphate from 1-deoxy-D-xylulose 5-phosphate: step 2/6. It participates in isoprenoid biosynthesis; isopentenyl diphosphate biosynthesis via DXP pathway; isopentenyl diphosphate from 1-deoxy-D-xylulose 5-phosphate: step 4/6. In terms of biological role, bifunctional enzyme that catalyzes the formation of 4-diphosphocytidyl-2-C-methyl-D-erythritol from CTP and 2-C-methyl-D-erythritol 4-phosphate (MEP) (IspD), and catalyzes the conversion of 4-diphosphocytidyl-2-C-methyl-D-erythritol 2-phosphate (CDP-ME2P) to 2-C-methyl-D-erythritol 2,4-cyclodiphosphate (ME-CPP) with a corresponding release of cytidine 5-monophosphate (CMP) (IspF). This Nitrobacter hamburgensis (strain DSM 10229 / NCIMB 13809 / X14) protein is Bifunctional enzyme IspD/IspF.